The chain runs to 204 residues: FMN-dependent NADH:quinone oxidoreductase 1 (204 aa).

FMN contacts are provided by residues serine 10 and 15 to 17 (SLS).

This sequence belongs to the azoreductase type 1 family. In terms of assembly, homodimer. Requires FMN as cofactor.

The enzyme catalyses 2 a quinone + NADH + H(+) = 2 a 1,4-benzosemiquinone + NAD(+). The catalysed reaction is N,N-dimethyl-1,4-phenylenediamine + anthranilate + 2 NAD(+) = 2-(4-dimethylaminophenyl)diazenylbenzoate + 2 NADH + 2 H(+). In terms of biological role, quinone reductase that provides resistance to thiol-specific stress caused by electrophilic quinones. Also exhibits azoreductase activity. Catalyzes the reductive cleavage of the azo bond in aromatic azo compounds to the corresponding amines. The protein is FMN-dependent NADH:quinone oxidoreductase 1 of Rhizobium etli (strain ATCC 51251 / DSM 11541 / JCM 21823 / NBRC 15573 / CFN 42).